Reading from the N-terminus, the 245-residue chain is Major prion protein (245 aa).

The signal sequence occupies residues 1-22 (MANLGCWMLVVFVATWSDLGLC). An interaction with GRB2, ERI3 and SYN1 region spans residues 23–222 (KKRPKPGGWN…ESQAYYQRGS (200 aa)). Residues 25–102 (RPKPGGWNTG…KPSKPKTSMK (78 aa)) are disordered. A run of 4 repeats spans residues 51–59 (PQGGGGWGQ), 60–67 (PHGGGWGQ), 68–75 (PHGGGWGQ), and 76–83 (PHGGGWGQ). Residues 51-83 (PQGGGGWGQPHGGGWGQPHGGGWGQPHGGGWGQ) form a 4 X 8 AA tandem repeats of P-H-G-G-G-W-G-Q region. Positions 52–87 (QGGGGWGQPHGGGWGQPHGGGWGQPHGGGWGQGGGT) are enriched in gly residues. Cu(2+)-binding residues include G54, G55, H61, G62, G63, H69, G70, G71, H77, G78, and G79. The span at 90–101 (QWHKPSKPKTSM) shows a compositional bias: basic residues. A disulfide bridge connects residues C171 and C206. N173 and N189 each carry an N-linked (GlcNAc...) asparagine glycan. Residue S222 is the site of GPI-anchor amidated serine attachment. Positions 223-245 (SMVLFSSPPVILLISFLIFLIVG) are cleaved as a propeptide — removed in mature form.

The protein belongs to the prion family. In terms of assembly, monomer and homodimer. Has a tendency to aggregate into amyloid fibrils containing a cross-beta spine, formed by a steric zipper of superposed beta-strands. Soluble oligomers may represent an intermediate stage on the path to fibril formation. Copper binding may promote oligomerization. Interacts with GRB2, APP, ERI3/PRNPIP and SYN1. Mislocalized cytosolically exposed PrP interacts with MGRN1; this interaction alters MGRN1 subcellular location and causes lysosomal enlargement. Interacts with KIAA1191.

The protein localises to the cell membrane. It is found in the golgi apparatus. Its primary physiological function is unclear. Has cytoprotective activity against internal or environmental stresses. May play a role in neuronal development and synaptic plasticity. May be required for neuronal myelin sheath maintenance. May play a role in iron uptake and iron homeostasis. Soluble oligomers are toxic to cultured neuroblastoma cells and induce apoptosis (in vitro). Association with GPC1 (via its heparan sulfate chains) targets PRNP to lipid rafts. Also provides Cu(2+) or Zn(2+) for the ascorbate-mediated GPC1 deaminase degradation of its heparan sulfate side chains. In Cercopithecus diana (Diana monkey), this protein is Major prion protein (PRNP).